A 291-amino-acid polypeptide reads, in one-letter code: 4-hydroxy-tetrahydrodipicolinate synthase (291 aa).

Threonine 44 lines the pyruvate pocket. Residue tyrosine 132 is the Proton donor/acceptor of the active site. Lysine 160 functions as the Schiff-base intermediate with substrate in the catalytic mechanism. Isoleucine 202 provides a ligand contact to pyruvate.

It belongs to the DapA family. Homotetramer; dimer of dimers.

The protein localises to the cytoplasm. It catalyses the reaction L-aspartate 4-semialdehyde + pyruvate = (2S,4S)-4-hydroxy-2,3,4,5-tetrahydrodipicolinate + H2O + H(+). Its pathway is amino-acid biosynthesis; L-lysine biosynthesis via DAP pathway; (S)-tetrahydrodipicolinate from L-aspartate: step 3/4. Catalyzes the condensation of (S)-aspartate-beta-semialdehyde [(S)-ASA] and pyruvate to 4-hydroxy-tetrahydrodipicolinate (HTPA). In Sphingopyxis alaskensis (strain DSM 13593 / LMG 18877 / RB2256) (Sphingomonas alaskensis), this protein is 4-hydroxy-tetrahydrodipicolinate synthase.